The primary structure comprises 86 residues: Large ribosomal subunit protein uL24 (86 aa).

This sequence belongs to the universal ribosomal protein uL24 family. Part of the 50S ribosomal subunit.

One of two assembly initiator proteins, it binds directly to the 5'-end of the 23S rRNA, where it nucleates assembly of the 50S subunit. Functionally, one of the proteins that surrounds the polypeptide exit tunnel on the outside of the subunit. This chain is Large ribosomal subunit protein uL24, found in Bdellovibrio bacteriovorus (strain ATCC 15356 / DSM 50701 / NCIMB 9529 / HD100).